A 223-amino-acid polypeptide reads, in one-letter code: Ribonuclease S-2 (223 aa).

Residues 1–22 (MAKSQLVSALFVFFFSLSPIYG) form the signal peptide. Cys-38 and Cys-44 form a disulfide bridge. N-linked (GlcNAc...) asparagine glycosylation is present at Asn-51. His-55 functions as the Proton donor in the catalytic mechanism. Residues His-55 and 94 to 95 (QL) each bind RNA. 3 disulfide bridges follow: Cys-71–Cys-119, Cys-178–Cys-211, and Cys-194–Cys-205. Gln-112 is a catalytic residue. 115–116 (KH) contacts RNA. His-116 (proton acceptor) is an active-site residue.

It belongs to the RNase T2 family. In terms of tissue distribution, pistil.

The protein resides in the secreted. The protein localises to the extracellular space. It catalyses the reaction a ribonucleotidyl-ribonucleotide-RNA + H2O = a 3'-end 3'-phospho-ribonucleotide-RNA + a 5'-end dephospho-ribonucleoside-RNA + H(+). Self-incompatibility (SI) is the inherited ability of a flowering plant to prevent self-fertilization by discriminating between self and non-self pollen during pollination. In many species of the Solanaceae, self-incompatibility is controlled by the single, multiallelic locus S. This stylar glycoprotein is associated with expression of self-incompatibility in potato. The sequence is that of Ribonuclease S-2 from Solanum tuberosum (Potato).